Consider the following 217-residue polypeptide: GrpE protein homolog 1, mitochondrial (217 aa).

The transit peptide at M1 to L27 directs the protein to the mitochondrion. K94 carries the post-translational modification N6-acetyllysine; alternate. Position 94 is an N6-succinyllysine; alternate (K94). K100 bears the N6-acetyllysine mark. K120 is modified (N6-succinyllysine). The residue at position 215 (K215) is an N6-acetyllysine; alternate. Position 215 is an N6-succinyllysine; alternate (K215).

This sequence belongs to the GrpE family. In terms of assembly, probable component of the PAM complex at least composed of a mitochondrial HSP70 protein, GRPEL1 or GRPEL2, TIMM44, TIMM16/PAM16 and TIMM14/DNAJC19. Binds to HSP70, HSC70 and HSJ1B. As to expression, ubiquitous. Particularly abundant in heart, kidney and liver.

It is found in the mitochondrion matrix. In terms of biological role, essential component of the PAM complex, a complex required for the translocation of transit peptide-containing proteins from the inner membrane into the mitochondrial matrix in an ATP-dependent manner. Seems to control the nucleotide-dependent binding of mitochondrial HSP70 to substrate proteins. The sequence is that of GrpE protein homolog 1, mitochondrial (Grpel1) from Rattus norvegicus (Rat).